Consider the following 243-residue polypeptide: Late expression factor 1 (243 aa).

Belongs to the baculoviridae LEF-1 family.

Required for late and very late gene expression. This is Late expression factor 1 (LEF-1) from Orgyia pseudotsugata multicapsid polyhedrosis virus (OpMNPV).